Consider the following 145-residue polypeptide: Large ribosomal subunit protein uL11 (145 aa).

Belongs to the universal ribosomal protein uL11 family. In terms of assembly, part of the ribosomal stalk of the 50S ribosomal subunit. Interacts with L10 and the large rRNA to form the base of the stalk. L10 forms an elongated spine to which L12 dimers bind in a sequential fashion forming a multimeric L10(L12)X complex. One or more lysine residues are methylated.

Its function is as follows. Forms part of the ribosomal stalk which helps the ribosome interact with GTP-bound translation factors. This chain is Large ribosomal subunit protein uL11, found in Coxiella burnetii (strain CbuK_Q154) (Coxiella burnetii (strain Q154)).